Reading from the N-terminus, the 354-residue chain is Uroporphyrinogen decarboxylase (354 aa).

Residues 27-31, Asp77, Tyr154, Thr209, and His327 each bind substrate; that span reads RQAGR.

This sequence belongs to the uroporphyrinogen decarboxylase family. Homodimer.

Its subcellular location is the cytoplasm. It catalyses the reaction uroporphyrinogen III + 4 H(+) = coproporphyrinogen III + 4 CO2. Its pathway is porphyrin-containing compound metabolism; protoporphyrin-IX biosynthesis; coproporphyrinogen-III from 5-aminolevulinate: step 4/4. In terms of biological role, catalyzes the decarboxylation of four acetate groups of uroporphyrinogen-III to yield coproporphyrinogen-III. This Pectobacterium atrosepticum (strain SCRI 1043 / ATCC BAA-672) (Erwinia carotovora subsp. atroseptica) protein is Uroporphyrinogen decarboxylase.